The following is a 774-amino-acid chain: Ras and Rab interactor 1 (774 aa).

Methionine 1 bears the N-acetylmethionine mark. The interval 1 to 52 (MEDPGETEAHPLGATSLNFVPGYQQEEKPSPDPLYDTPDARGVQAGGSQQPA) is disordered. Serine 16 carries the post-translational modification Phosphoserine. Tyrosine 35 is modified (phosphotyrosine; by ABL1 and ABL2). In terms of domain architecture, SH2 spans 68 to 162 (WLQLRANAAA…ILLLPLPLPR (95 aa)). Disordered regions lie at residues 188 to 211 (LNTK…RSPQ) and 249 to 342 (STET…RPRH). A phosphoserine mark is found at serine 209, serine 257, serine 330, and serine 334. Positions 256 to 268 (LSPPAVPPPPVPV) are enriched in pro residues. The segment covering 327–337 (SSGSPTTSPRL) has biased composition (low complexity). Residue serine 351 is modified to Phosphoserine; by PKD/PRKD1. Residues 456-598 (LSTDGSLGRL…LSGLSQAHAL (143 aa)) enclose the VPS9 domain. Serine 609 carries the post-translational modification Phosphoserine. The region spanning 624–706 (FQHLLRVAYQ…GYLIYRRAER (83 aa)) is the Ras-associating domain. An Omega-N-methylarginine modification is found at arginine 692. Positions 704–766 (AERPETQRAA…GHMQLEEQKA (63 aa)) are enriched in basic and acidic residues. Residues 704–774 (AERPETQRAA…KAEGCPALEE (71 aa)) are disordered.

This sequence belongs to the RIN (Ras interaction/interference) family. As to quaternary structure, interacts with the GTP-bound form of Ras proteins (NRAS, HRAS and KRAS). This interaction prevents the association between RAF1 and Ras. Interacts with 14-3-3 proteins YWHAB, YWHAE and YWHAZ when phosphorylated on Ser-351. Interacts with the SH3 domain of ABL1 and ABL2. Interacts with RAB5A. The interaction with Ras is probably regulated and antagonized by the interaction with 14-3-3 proteins. The interaction with 14-3-3 proteins is regulated by phosphorylation on Ser-351. Phosphorylated on tyrosine residues by ABL1 and ABL2. Phosphorylation at Ser-351 by PRKD1 induces interaction with 14-3-3 proteins.

The protein resides in the cytoplasm. It localises to the membrane. The protein localises to the cytoskeleton. In terms of biological role, ras effector protein, which may serve as an inhibitory modulator of neuronal plasticity in aversive memory formation. Can affect Ras signaling at different levels. First, by competing with RAF1 protein for binding to activated Ras. Second, by enhancing signaling from ABL1 and ABL2, which regulate cytoskeletal remodeling. Third, by activating RAB5A, possibly by functioning as a guanine nucleotide exchange factor (GEF) for RAB5A, by exchanging bound GDP for free GTP, and facilitating Ras-activated receptor endocytosis. In Rattus norvegicus (Rat), this protein is Ras and Rab interactor 1 (Rin1).